The sequence spans 123 residues: Small ribosomal subunit protein uS12c (123 aa).

The tract at residues 103 to 123 (AAGVKNRKQSRSKYGAKKPKE) is disordered. Over residues 107–123 (KNRKQSRSKYGAKKPKE) the composition is skewed to basic residues.

The protein belongs to the universal ribosomal protein uS12 family. As to quaternary structure, part of the 30S ribosomal subunit.

The protein resides in the plastid. It is found in the chloroplast. Its function is as follows. With S4 and S5 plays an important role in translational accuracy. Located at the interface of the 30S and 50S subunits. This chain is Small ribosomal subunit protein uS12c (rps12), found in Guillardia theta (Cryptophyte).